Reading from the N-terminus, the 313-residue chain is Probable cell division protein WhiA (313 aa).

A DNA-binding region (H-T-H motif) is located at residues 276–309; sequence SLKELGEMLHPKLGKSGVNHRLRKLDEIAERIRK.

This sequence belongs to the WhiA family.

Its function is as follows. Involved in cell division and chromosome segregation. This Ruminiclostridium cellulolyticum (strain ATCC 35319 / DSM 5812 / JCM 6584 / H10) (Clostridium cellulolyticum) protein is Probable cell division protein WhiA.